Reading from the N-terminus, the 168-residue chain is Plastocyanin A, chloroplastic (168 aa).

Residues 1 to 69 (MATVTSAAVS…SAMIASNAMA (69 aa)) constitute a chloroplast transit peptide. The Plastocyanin-like domain maps to 70-168 (IDVLLGADDG…AGMVGKVTVN (99 aa)). Cu cation-binding residues include histidine 106, cysteine 153, histidine 156, and methionine 161.

This sequence belongs to the plastocyanin family. Cu(2+) serves as cofactor.

The protein localises to the plastid. The protein resides in the chloroplast thylakoid membrane. Participates in electron transfer between P700 and the cytochrome b6-f complex in photosystem I. The chain is Plastocyanin A, chloroplastic (PETE) from Populus nigra (Lombardy poplar).